Reading from the N-terminus, the 281-residue chain is ATP phosphoribosyltransferase (281 aa).

Belongs to the ATP phosphoribosyltransferase family. Long subfamily. The cofactor is Mg(2+).

Its subcellular location is the cytoplasm. It catalyses the reaction 1-(5-phospho-beta-D-ribosyl)-ATP + diphosphate = 5-phospho-alpha-D-ribose 1-diphosphate + ATP. Its pathway is amino-acid biosynthesis; L-histidine biosynthesis; L-histidine from 5-phospho-alpha-D-ribose 1-diphosphate: step 1/9. With respect to regulation, feedback inhibited by histidine. In terms of biological role, catalyzes the condensation of ATP and 5-phosphoribose 1-diphosphate to form N'-(5'-phosphoribosyl)-ATP (PR-ATP). Has a crucial role in the pathway because the rate of histidine biosynthesis seems to be controlled primarily by regulation of HisG enzymatic activity. The sequence is that of ATP phosphoribosyltransferase from Kocuria rhizophila (strain ATCC 9341 / DSM 348 / NBRC 103217 / DC2201).